A 1040-amino-acid polypeptide reads, in one-letter code: Protocadherin-10 (1040 aa).

Residues 1–18 form the signal peptide; that stretch reads MIVLLLFALLWMVEGVFS. Cadherin domains follow at residues 19 to 122, 123 to 250, 251 to 358, 359 to 463, 464 to 574, and 582 to 690; these read QLHY…PPSF, PEPD…VPAF, DQPV…APEI, SFST…APRF, SQPV…APAI, and NGTP…GGGG. Topologically, residues 19–715 are extracellular; sequence QLHYTVQEEQ…GGGETSLDLT (697 aa). The segment covering 207–223 has biased composition (gly residues); it reads GGGGGVGEGGGGGGGAG. The interval 207-228 is disordered; the sequence is GGGGGVGEGGGGGGGAGLPPQQ. The N-linked (GlcNAc...) asparagine glycan is linked to N273. N557 carries N-linked (GlcNAc...) asparagine glycosylation. The segment covering 686–697 has biased composition (gly residues); sequence QGGGGSGGGGSG. The segment at 686 to 708 is disordered; the sequence is QGGGGSGGGGSGEHQRPSRSGGG. A helical membrane pass occupies residues 716-736; it reads LILIIALGSVSFIFLLAMIVL. The Cytoplasmic portion of the chain corresponds to 737 to 1040; the sequence is AVRCQKEKKL…PPYLTRKRIC (304 aa). Positions 899 to 927 are disordered; it reads AFQEADIVSSKDSGHGDSEQGDSDHDATN. Basic and acidic residues predominate over residues 910 to 926; that stretch reads DSGHGDSEQGDSDHDAT.

As to expression, moderately expressed in all regions of the brain examined, as well as in testis and ovary, and low expression in all other tissues tested.

It localises to the cell membrane. Functionally, potential calcium-dependent cell-adhesion protein. (Microbial infection) Acts as a receptor for Western equine encephalitis virus. The sequence is that of Protocadherin-10 (PCDH10) from Homo sapiens (Human).